Here is a 432-residue protein sequence, read N- to C-terminus: Gamma-glutamyl phosphate reductase (432 aa).

Belongs to the gamma-glutamyl phosphate reductase family.

It localises to the cytoplasm. The catalysed reaction is L-glutamate 5-semialdehyde + phosphate + NADP(+) = L-glutamyl 5-phosphate + NADPH + H(+). Its pathway is amino-acid biosynthesis; L-proline biosynthesis; L-glutamate 5-semialdehyde from L-glutamate: step 2/2. Catalyzes the NADPH-dependent reduction of L-glutamate 5-phosphate into L-glutamate 5-semialdehyde and phosphate. The product spontaneously undergoes cyclization to form 1-pyrroline-5-carboxylate. The chain is Gamma-glutamyl phosphate reductase from Deinococcus radiodurans (strain ATCC 13939 / DSM 20539 / JCM 16871 / CCUG 27074 / LMG 4051 / NBRC 15346 / NCIMB 9279 / VKM B-1422 / R1).